We begin with the raw amino-acid sequence, 31 residues long: GSIPCGESCVYIPCISAVLGCSCKNKVCYRN.

A cross-link (cyclopeptide (Gly-Asn)) is located at residues 1–31; that stretch reads GSIPCGESCVYIPCISAVLGCSCKNKVCYRN. Intrachain disulfides connect Cys5–Cys21, Cys9–Cys23, and Cys14–Cys28.

This sequence belongs to the cyclotide family. Bracelet subfamily. This is a cyclic peptide.

Probably participates in a plant defense mechanism. In Melicytus dentatus (Tree violet), this protein is Cyclotide mden-L.